We begin with the raw amino-acid sequence, 792 residues long: MKFSENWLRSHVPIQATRDELSATLTAIGLEVEEVTPLGESLGQVVVARIVEAVRHPEADRLQVCSVDAGQGELMQIVCGAPNARAGLVAPLALVGAKIGELTITAAKLRGVASNGMLCSAKELGLDSDASGLFELPDDAPVGQALAEYLGLPDASIEIKLTPNRADCFSVRGIAFDVAAACASEVVAFDAVAVAPVSTRSLAVELDAGKDAPRYCGRVIEGIDPAAKTPVWLAERLRRSGVRPVSLLVDITQYVMLELGQPMHAFDLETLHGPIGVRRSRAGEQLALLDGRQVTLDDSFLTITDAGRAVALAGLMGGLDTRVTETTRNVFLESAYFDPAAIMGRGRKLGLHTDAGHRFERGVDPALPPQAIEVATRLVLELAGGTPGPVVHAQLPEHLPQPVHIRLRRARIARVLGIQIDDADVVRMLRALGMHVEAVAEGWEVMAPSRRFDIAIEEDLIEELARIHGYDRVPTTLPGGASRIAMPSETQLDELSVRRQLVARELQETINYAFVDAALLERWQLTEGLVPLANPLSAELAIMRPRLLPGLVATLGRNAARQAGRVRLFELGKVFAAAADTGAAPGESQHVAAAVCGDALALQWGEPARKVDFHDLKGDLMALAAASGAQLEFQPSTQPFGHPGRSADIYREGVCIGWIGQVHPRLAKALDIDVDVIAFELQLMPLVQRTLPRAGELSRFPSVRRDLAFLVPDEVSWAAVSASVRTTVGPLLREVQLFDRYVGQGVEPGFKSLAMGLILQDNSRTLTDRDVDAVVADVVAVIEREHRARIRS.

One can recognise a tRNA-binding domain in the interval 39 to 147; the sequence is GESLGQVVVA…DDAPVGQALA (109 aa). The B5 domain occupies 400-475; that stretch reads PQPVHIRLRR…RIHGYDRVPT (76 aa). Mg(2+)-binding residues include aspartate 453, aspartate 459, glutamate 462, and glutamate 463. The FDX-ACB domain occupies 698–791; it reads SRFPSVRRDL…IEREHRARIR (94 aa).

This sequence belongs to the phenylalanyl-tRNA synthetase beta subunit family. Type 1 subfamily. As to quaternary structure, tetramer of two alpha and two beta subunits. The cofactor is Mg(2+).

Its subcellular location is the cytoplasm. It catalyses the reaction tRNA(Phe) + L-phenylalanine + ATP = L-phenylalanyl-tRNA(Phe) + AMP + diphosphate + H(+). The protein is Phenylalanine--tRNA ligase beta subunit of Xanthomonas axonopodis pv. citri (strain 306).